The primary structure comprises 278 residues: 2,5-diketo-D-gluconic acid reductase A (278 aa).

The Proton donor role is filled by Y50. H108 contacts substrate. G188–N242 is an NADP(+) binding site. The disordered stretch occupies residues D259 to D278.

This sequence belongs to the aldo/keto reductase family. Monomer.

The protein resides in the cytoplasm. It carries out the reaction 2-dehydro-L-idonate + NADP(+) = 2,5-didehydro-D-gluconate + NADPH + H(+). Inhibited by Zn(2+), Fe(3+), Cu(2+) and Ni(2+). In terms of biological role, catalyzes the reduction of 2,5-diketo-D-gluconic acid (25DKG) to 2-keto-L-gulonic acid (2KLG). 5-keto-D-fructose and dihydroxyacetone can also serve as substrates. 25DKGR-A exhibits a greater selectivity for the substrate and higher thermal stability than 25DKGR-B. This chain is 2,5-diketo-D-gluconic acid reductase A (dkgA), found in Corynebacterium sp. (strain ATCC 31090).